We begin with the raw amino-acid sequence, 467 residues long: UDP-N-acetylmuramate--L-alanine ligase (467 aa).

123–129 (GTHGKST) contributes to the ATP binding site.

Belongs to the MurCDEF family.

It localises to the cytoplasm. It carries out the reaction UDP-N-acetyl-alpha-D-muramate + L-alanine + ATP = UDP-N-acetyl-alpha-D-muramoyl-L-alanine + ADP + phosphate + H(+). Its pathway is cell wall biogenesis; peptidoglycan biosynthesis. Cell wall formation. The polypeptide is UDP-N-acetylmuramate--L-alanine ligase (Arthrobacter sp. (strain FB24)).